Reading from the N-terminus, the 824-residue chain is MSNPVCISNSTNGSSNSLNGESVSPNRLGSSPGSPISKASSFDLNGKKPTKSNVVRLLLNRTNSGSNLLSKRRTSETGDDDSNSSVGLLNNSTGSIGKMNTPESSPKSSYILSSSIGSGGSGGGGGSSGSLQNLDSASNNSSGPRSRSGSLGKNNSSQQNNNNLILDPNFNNIDKSLWTVRSLKEHSNLVDIMERIKPASRAISFGQIYASEETQFEFDPVIGRDNILQLILQHLQFEGLMDSRKILEEEAKIQYPEYTFNESRLVTLLRAVIKDSDKVFDLTLNDRDKDSQQKLEEHLAFLGLFKDESQTNMVEDVNIYDEPENSNIIYVDEKDNDKPSKDSPTTATTTTTATTIAPSTSINNLSSLSVSISSNNINNNNNNNNNINNLNSTQLISNTQQQQATPNTPPQGLKSTQSITGSTGTLGPQVKAASLNKLVILLTPENNHDLEYTKTFLLMYQSFTTPEILLQKLIQRYHVPQKAGQSVAEWRQRSTHIQLRVLNVLKTWIKDYFSDFSEKLILAIKSLLESMRQTGNMSYAKVISDALNSGLKKSGRNNTVFTVSAPEPKVPKNIWSHNLDIFSVDEEEISRQLTLMDFEIFSNIKSTELLNQCWNKPKLRHRSPNVLELIGRFNEISQWTATSILSWPKVKDRARIMGKFIKIAEYCMKHLNNFNTSMAILSGLNASSVHRLKFTKEELPRHTQQVYTELQFHLSSAQAYKEYRALLAKANPPCLPYLGVYLTDLTFFEEGNPDFIQGFINFGKRKLIYGSISNVQSFQNTKYNLQPVYQIAKLLKGFKLLEENELYTRSMSFEPRNKERSEIL.

Disordered stretches follow at residues 1-51 (MSNP…KPTK) and 65-167 (GSNL…LILD). Positions 8 to 41 (SNSTNGSSNSLNGESVSPNRLGSSPGSPISKASS) are enriched in low complexity. Polar residues predominate over residues 83–95 (NSSVGLLNNSTGS). The segment covering 104 to 116 (SSPKSSYILSSSI) has biased composition (low complexity). Residues 117-128 (GSGGSGGGGGSS) are compositionally biased toward gly residues. Over residues 136–167 (SASNNSSGPRSRSGSLGKNNSSQQNNNNLILD) the composition is skewed to low complexity. In terms of domain architecture, LisH spans 223–255 (GRDNILQLILQHLQFEGLMDSRKILEEEAKIQY). 2 disordered regions span residues 330-354 (YVDEKDNDKPSKDSPTTATTTTTAT) and 398-425 (NTQQQQATPNTPPQGLKSTQSITGSTGT). The segment covering 331 to 341 (VDEKDNDKPSK) has biased composition (basic and acidic residues). The span at 343–354 (SPTTATTTTTAT) shows a compositional bias: low complexity. The segment covering 413–425 (LKSTQSITGSTGT) has biased composition (polar residues). One can recognise an N-terminal Ras-GEF domain in the interval 426-551 (LGPQVKAASL…VISDALNSGL (126 aa)). The 232-residue stretch at 585-816 (DEEEISRQLT…YTRSMSFEPR (232 aa)) folds into the Ras-GEF domain.

In terms of biological role, promotes the exchange of Ras-bound GDP by GTP. This Dictyostelium discoideum (Social amoeba) protein is Ras guanine nucleotide exchange factor I (gefI).